Consider the following 463-residue polypeptide: Lactadherin (463 aa).

A signal peptide spans 1-22 (MQVSRVLAALCGMLLCASGLFA). EGF-like domains lie at 24-61 (SGDFCDSSLCLNGGTCLTGQDNDIYCLCPEGFTGLVCN) and 64-108 (ERGP…IHCE). 3 disulfides stabilise this stretch: Cys-28/Cys-39, Cys-33/Cys-49, and Cys-51/Cys-60. Residue Asn-61 is glycosylated (N-linked (GlcNAc...) asparagine). Cystine bridges form between Cys-68/Cys-79, Cys-73/Cys-96, Cys-98/Cys-107, Cys-148/Cys-303, Cys-290/Cys-294, and Cys-308/Cys-463. The Cell attachment site motif lies at 87 to 89 (RGD). F5/8 type C domains follow at residues 148–303 (CSTQ…LLGC) and 308–463 (CSEP…LLGC). Asn-266 carries N-linked (GlcNAc...) asparagine glycosylation. 2 N-linked (GlcNAc...) asparagine glycosylation sites follow: Asn-316 and Asn-426.

Post-translationally, N-glycosylated. Isoform 1 also exists in both an O-glycosylated and a non-O-glycosylated form. In terms of tissue distribution, mammary epithelial cell surfaces and spermatozoan. Isoform 2 is present in brain, heart, kidney and spleen and at low levels in lung, liver, small intestine and testis.

It is found in the membrane. The protein localises to the secreted. It localises to the cytoplasmic vesicle. The protein resides in the secretory vesicle. Its subcellular location is the acrosome membrane. Its function is as follows. Contributes to phagocytic removal of apoptotic cells in many tissues. Specific ligand for the alpha-v/beta-3 and alpha-v/beta-5 receptors. Also binds to phosphatidylserine-enriched cell surfaces in a receptor-independent manner. Zona pellucida-binding protein which may play a role in gamete interaction. Plays an important role in the maintenance of intestinal epithelial homeostasis and the promotion of mucosal healing. Promotes VEGF-dependent neovascularization. This chain is Lactadherin (Mfge8), found in Mus musculus (Mouse).